The primary structure comprises 230 residues: Large ribosomal subunit protein uL1 (230 aa).

The protein belongs to the universal ribosomal protein uL1 family. Part of the 50S ribosomal subunit.

Binds directly to 23S rRNA. The L1 stalk is quite mobile in the ribosome, and is involved in E site tRNA release. Its function is as follows. Protein L1 is also a translational repressor protein, it controls the translation of the L11 operon by binding to its mRNA. The protein is Large ribosomal subunit protein uL1 of Paramagnetospirillum magneticum (strain ATCC 700264 / AMB-1) (Magnetospirillum magneticum).